A 435-amino-acid chain; its full sequence is Mitochondrial association factor 1 form a1 (435 aa).

The first 20 residues, Met-1 to Gly-20, serve as a signal peptide directing secretion. The Vacuolar portion of the chain corresponds to Ala-21 to Arg-95. The tract at residues Gly-43–Thr-88 is disordered. A compositionally biased stretch (basic and acidic residues) spans Val-55–Glu-64. The helical transmembrane segment at Arg-96–Leu-116 threads the bilayer. Residues Arg-117–Asp-435 are Cytoplasmic-facing. A disordered region spans residues Arg-120 to Pro-162. Low complexity predominate over residues Pro-141–Pro-153.

Interacts with host SAMM50.

The protein resides in the parasitophorous vacuole membrane. During host cell infection by tachyzoites, does not play a role in tethering the parasitophorous vacuole to the host mitochondria, probably because it does not bind host mitochondrial import protein TOMM70. The protein is Mitochondrial association factor 1 form a1 of Toxoplasma gondii.